The primary structure comprises 102 residues: Iron-sulfur cluster assembly protein CyaY (102 aa).

Belongs to the frataxin family.

Functionally, involved in iron-sulfur (Fe-S) cluster assembly. May act as a regulator of Fe-S biogenesis. This Pasteurella multocida (strain Pm70) protein is Iron-sulfur cluster assembly protein CyaY.